A 495-amino-acid polypeptide reads, in one-letter code: Protein painting of fourth (495 aa).

The interval 1–51 is disordered; it reads MDSKRAALESGDGPDAKRLDTTDDQDKEASGGDGSQVMLAKHVAPYTGHGC. Positions 215-289 constitute an RRM domain; sequence CSLYVGNIPF…RTLTVRYRRL (75 aa). Residues 332–342 show a composition bias toward low complexity; it reads ISDSDNCSDSS. Disordered regions lie at residues 332–358, 432–451, and 461–495; these read ISDS…INEQ, PVPA…KKAK, and GPFR…DPDP. The span at 345–358 shows a compositional bias: basic and acidic residues; it reads GKEDGKRKKKINEQ. Positions 351–367 match the Bipartite nuclear localization signal motif; the sequence is RKKKINEQEREIEKLKR. A compositionally biased stretch (basic and acidic residues) spans 472–495; it reads TADEYEKDDRLEELYAQLERDPDP.

As to quaternary structure, interacts with Zeste. As to expression, weakly expressed in embryos. Expression increases during larval and pupal stages. In adults, it is predominantly expressed in males, while it is weakly expressed in females.

The protein resides in the nucleus. The protein localises to the chromosome. Functionally, probable RNA-binding protein that specifically binds to the fourth chromosome and may bind an RNA that spreads the fourth chromosome. May be a reminiscence of X chromosome dosage compensation of ancestral Drosophila species in which the X and the fourth chromosomes are one single chromosome. This Drosophila melanogaster (Fruit fly) protein is Protein painting of fourth (Pof).